Consider the following 184-residue polypeptide: dCTP deaminase (184 aa).

DCTP is bound by residues 107 to 112, 131 to 133, glutamine 152, tyrosine 166, and glutamine 176; these read KSTYAR and TLE. Residue glutamate 133 is the Proton donor/acceptor of the active site.

This sequence belongs to the dCTP deaminase family. In terms of assembly, homotrimer.

The enzyme catalyses dCTP + H2O + H(+) = dUTP + NH4(+). The protein operates within pyrimidine metabolism; dUMP biosynthesis; dUMP from dCTP (dUTP route): step 1/2. Its function is as follows. Catalyzes the deamination of dCTP to dUTP. This Rhizorhabdus wittichii (strain DSM 6014 / CCUG 31198 / JCM 15750 / NBRC 105917 / EY 4224 / RW1) (Sphingomonas wittichii) protein is dCTP deaminase.